A 410-amino-acid polypeptide reads, in one-letter code: MLKGEKVVLAYSGGLDTSVIIPWLKENYECEIIAACINVGQGEELKYIKDKALASGASKVYIEDVKEEFVKDYIFPTLKAGAVYEGKYLLGTSMARPLIAKKLVEIAHKEGAKAIAHGATGKGNDQVRFEVSIHALDPSIKIIAPWRIWDLKSREDEIDYAKKKGIPIPVTKEKIYSVDNNLWHVSHEGGDLEDPWNEPKSDLYDIITPPDKAPDKPEYVLIEFEKGIPVKVNGKALEPVKLIEELNAIAGRNGVGIADLVENRLVGMKSRGVYETPAGTLLYAAHKELEYLVLDKETMRFKDLVSQKYADLVYNGLWFSPLKAALDAFVEETQKNVTGVVRLKLYKGNVINAGVKSPYSLYNQEFVTFGKDEVYNQKDAEGFINLFGLSLKIKALMEMERKDMDEAVGR.

10–18 (AYSGGLDTS) lines the ATP pocket. Positions 88 and 93 each coordinate L-citrulline. Gly118 is a binding site for ATP. Residues Thr120, Asn124, and Asp125 each contribute to the L-aspartate site. Asn124 is a binding site for L-citrulline. L-citrulline-binding residues include Arg128, Ser177, Ser186, Glu262, and Tyr274.

The protein belongs to the argininosuccinate synthase family. Type 1 subfamily. Homotetramer.

It localises to the cytoplasm. It catalyses the reaction L-citrulline + L-aspartate + ATP = 2-(N(omega)-L-arginino)succinate + AMP + diphosphate + H(+). It functions in the pathway amino-acid biosynthesis; L-arginine biosynthesis; L-arginine from L-ornithine and carbamoyl phosphate: step 2/3. The chain is Argininosuccinate synthase from Thermoanaerobacter sp. (strain X514).